A 170-amino-acid polypeptide reads, in one-letter code: Ureidoglycolate lyase 1 (170 aa).

The protein belongs to the ureidoglycolate lyase family. In terms of assembly, homodimer. It depends on Ni(2+) as a cofactor.

The enzyme catalyses (S)-ureidoglycolate = urea + glyoxylate. Its pathway is nitrogen metabolism; (S)-allantoin degradation. Catalyzes the catabolism of the allantoin degradation intermediate (S)-ureidoglycolate, generating urea and glyoxylate. Involved in the utilization of allantoin as nitrogen source. The protein is Ureidoglycolate lyase 1 of Rhizobium meliloti (strain 1021) (Ensifer meliloti).